The primary structure comprises 248 residues: UPF0736 protein BT9727_1080 (248 aa).

The protein belongs to the UPF0736 family.

The sequence is that of UPF0736 protein BT9727_1080 from Bacillus thuringiensis subsp. konkukian (strain 97-27).